An 874-amino-acid chain; its full sequence is Probable inorganic carbon transporter subunit DabA (874 aa).

Positions 398, 400, 580, and 595 each coordinate Zn(2+).

Belongs to the inorganic carbon transporter (TC 9.A.2) DabA family. In terms of assembly, forms a complex with DabB. It depends on Zn(2+) as a cofactor.

The protein resides in the cell membrane. Part of an energy-coupled inorganic carbon pump. This Bacillus thuringiensis subsp. konkukian (strain 97-27) protein is Probable inorganic carbon transporter subunit DabA.